Reading from the N-terminus, the 508-residue chain is Photosystem II CP47 reaction center protein (508 aa).

6 consecutive transmembrane segments (helical) span residues 21–36, 101–115, 140–156, 203–218, 237–252, and 457–472; these read SVHI…WAGS, IVFS…IWHW, GIHL…FGAF, IAAG…FHLS, VLSS…AFVV, and TFAL…HGAR.

Belongs to the PsbB/PsbC family. PsbB subfamily. In terms of assembly, PSII is composed of 1 copy each of membrane proteins PsbA, PsbB, PsbC, PsbD, PsbE, PsbF, PsbH, PsbI, PsbJ, PsbK, PsbL, PsbM, PsbT, PsbX, PsbY, PsbZ, Psb30/Ycf12, at least 3 peripheral proteins of the oxygen-evolving complex and a large number of cofactors. It forms dimeric complexes. Requires Binds multiple chlorophylls. PSII binds additional chlorophylls, carotenoids and specific lipids. as cofactor.

The protein resides in the plastid. It localises to the chloroplast thylakoid membrane. One of the components of the core complex of photosystem II (PSII). It binds chlorophyll and helps catalyze the primary light-induced photochemical processes of PSII. PSII is a light-driven water:plastoquinone oxidoreductase, using light energy to abstract electrons from H(2)O, generating O(2) and a proton gradient subsequently used for ATP formation. This chain is Photosystem II CP47 reaction center protein, found in Oryza sativa subsp. indica (Rice).